The sequence spans 303 residues: tRNA pseudouridine synthase B (303 aa).

The Nucleophile role is filled by Asp-38.

Belongs to the pseudouridine synthase TruB family. Type 1 subfamily.

The enzyme catalyses uridine(55) in tRNA = pseudouridine(55) in tRNA. Its function is as follows. Responsible for synthesis of pseudouridine from uracil-55 in the psi GC loop of transfer RNAs. This Levilactobacillus brevis (strain ATCC 367 / BCRC 12310 / CIP 105137 / JCM 1170 / LMG 11437 / NCIMB 947 / NCTC 947) (Lactobacillus brevis) protein is tRNA pseudouridine synthase B.